A 536-amino-acid chain; its full sequence is UDP-N-acetylmuramate--L-alanine ligase (536 aa).

Residue G133 to T139 participates in ATP binding.

The protein belongs to the MurCDEF family.

It localises to the cytoplasm. It carries out the reaction UDP-N-acetyl-alpha-D-muramate + L-alanine + ATP = UDP-N-acetyl-alpha-D-muramoyl-L-alanine + ADP + phosphate + H(+). The protein operates within cell wall biogenesis; peptidoglycan biosynthesis. In terms of biological role, cell wall formation. In Wolbachia sp. subsp. Brugia malayi (strain TRS), this protein is UDP-N-acetylmuramate--L-alanine ligase.